Here is a 314-residue protein sequence, read N- to C-terminus: Deoxymugineic acid synthase 1-B (314 aa).

The interval 1–22 (MGAGDKTAAGMPRIGMGTAVQG) is disordered. Asp44 lines the NADP(+) pocket. Catalysis depends on Tyr49, which acts as the Proton donor. Residue His112 coordinates substrate. NADP(+)-binding positions include 158-159 (AN), Gln180, 258-266 (FDEARMREN), and 273-281 (ELTEEERRR).

It belongs to the aldo/keto reductase family. Mostly expressed in root tissues, observed in mesocotyl and embryonic roots, seedling roots, crown and seedling leafes, mature bracts, anthers, pistil, caryopsis and embryos.

It carries out the reaction 2'-deoxymugineate + NAD(+) = 3''-deamino-3''-oxonicotianamine + NADH + H(+). The catalysed reaction is 2'-deoxymugineate + NADP(+) = 3''-deamino-3''-oxonicotianamine + NADPH + H(+). It functions in the pathway siderophore biosynthesis. Functionally, catalyzes the reduction of a 3''-keto intermediate during the biosynthesis of 2'-deoxymugineic acid (DMA) from L-Met. Involved in the formation of phytosiderophores (MAs) belonging to the mugineic acid family and required to acquire iron. This Triticum aestivum (Wheat) protein is Deoxymugineic acid synthase 1-B.